A 101-amino-acid polypeptide reads, in one-letter code: CRISPR-associated endoribonuclease Cas2 (101 aa).

Aspartate 8 is a binding site for Mg(2+).

Belongs to the CRISPR-associated endoribonuclease Cas2 protein family. Homodimer, forms a heterotetramer with a Cas1 homodimer. The cofactor is Mg(2+).

Its function is as follows. CRISPR (clustered regularly interspaced short palindromic repeat), is an adaptive immune system that provides protection against mobile genetic elements (viruses, transposable elements and conjugative plasmids). CRISPR clusters contain sequences complementary to antecedent mobile elements and target invading nucleic acids. CRISPR clusters are transcribed and processed into CRISPR RNA (crRNA). Functions as a ssRNA-specific endoribonuclease. Involved in the integration of spacer DNA into the CRISPR cassette. This is CRISPR-associated endoribonuclease Cas2 from Ligilactobacillus salivarius (strain UCC118) (Lactobacillus salivarius).